Reading from the N-terminus, the 146-residue chain is Putative actin-depolymerizing factor 8 (146 aa).

Residues 14-144 (PAWIEVPEKS…DLEVLRGRAN (131 aa)) form the ADF-H domain.

The protein belongs to the actin-binding proteins ADF family.

Its function is as follows. Actin-depolymerizing protein. Severs actin filaments (F-actin) and binds to actin monomers. This Oryza sativa subsp. japonica (Rice) protein is Putative actin-depolymerizing factor 8 (ADF8).